The chain runs to 436 residues: Carboxypeptidase A5 (436 aa).

An N-terminal signal peptide occupies residues 1 to 33 (MQGTPAGGTSPGPSPMDRQTLLVFSLILAAALG). Positions 34–126 (QMNFTGDQVL…EREAMAKSRR (93 aa)) are cleaved as a propeptide — activation peptide. In terms of domain architecture, Peptidase M14 spans 138–431 (SYHTLEEISS…MALRTIMEHT (294 aa)). The Zn(2+) site is built by histidine 196 and glutamate 199. Substrate is bound by residues 196–199 (HSRE), arginine 254, and 271–272 (NR). Cysteines 265 and 288 form a disulfide. Histidine 323 is a Zn(2+) binding site. Residues 324–325 (SY) and tyrosine 375 contribute to the substrate site. Glutamate 397 functions as the Proton donor/acceptor in the catalytic mechanism.

This sequence belongs to the peptidase M14 family. Requires Zn(2+) as cofactor.

It is found in the secreted. This chain is Carboxypeptidase A5 (CPA5), found in Macaca fascicularis (Crab-eating macaque).